A 302-amino-acid polypeptide reads, in one-letter code: AP-1 complex-associated regulatory protein (302 aa).

S29 is subject to Phosphoserine. Positions 78–138 are interaction with AP1G1; the sequence is DSIAEKQKDL…ERQRIVQQYH (61 aa). Positions 80-138 form a coiled coil; it reads IAEKQKDLDKKIQKELALQEEKLRLEEEALYAAQREAARAAKQRKLLEQERQRIVQQYH. Over residues 188-206 the composition is skewed to polar residues; it reads CDLMTKTKSTSGNDDSTSL. The tract at residues 188–258 is disordered; the sequence is CDLMTKTKST…TSASDDSNGL (71 aa). Residues 199–215 form a sufficient for association with the Arp2/3 complex region; sequence GNDDSTSLDLEWEDEEG. Over residues 221-233 the composition is skewed to basic and acidic residues; the sequence is PMRERSKTEEDIL. S226 is subject to Phosphoserine. Residue T228 is modified to Phosphothreonine. The span at 242-255 shows a compositional bias: polar residues; sequence KKTGSNPTSASDDS.

As to quaternary structure, interacts (via coiled-coil domain) with AP1G1 (via GAE domain). Interacts with KIF5B. Associates with the Arp2/3 complex. In terms of processing, palmitoylated.

It localises to the golgi apparatus. The protein resides in the trans-Golgi network. Its subcellular location is the late endosome. It is found in the early endosome. Necessary for adaptor protein complex 1 (AP-1)-dependent transport between the trans-Golgi network and endosomes. Regulates the membrane association of AP1G1/gamma1-adaptin, one of the subunits of the AP-1 adaptor complex. The direct interaction with AP1G1/gamma1-adaptin attenuates the release of the AP-1 complex from membranes. Regulates endosomal membrane traffic via association with AP-1 and KIF5B thus linking kinesin-based plus-end-directed microtubular transport to AP-1-dependent membrane traffic. May act as effector of AP-1 in calcium-induced endo-lysosome secretion. Inhibits Arp2/3 complex function; negatively regulates cell spreading, size and motility via intracellular sequestration of the Arp2/3 complex. In Homo sapiens (Human), this protein is AP-1 complex-associated regulatory protein (AP1AR).